A 416-amino-acid chain; its full sequence is Enolase (416 aa).

Glutamine 160 is a (2R)-2-phosphoglycerate binding site. Catalysis depends on glutamate 204, which acts as the Proton donor. Mg(2+)-binding residues include aspartate 239, glutamate 280, and aspartate 306. Positions 331, 360, 361, and 382 each coordinate (2R)-2-phosphoglycerate. Lysine 331 (proton acceptor) is an active-site residue.

This sequence belongs to the enolase family. Mg(2+) serves as cofactor.

The protein localises to the cytoplasm. It is found in the secreted. It localises to the cell surface. It catalyses the reaction (2R)-2-phosphoglycerate = phosphoenolpyruvate + H2O. It functions in the pathway carbohydrate degradation; glycolysis; pyruvate from D-glyceraldehyde 3-phosphate: step 4/5. In terms of biological role, catalyzes the reversible conversion of 2-phosphoglycerate (2-PG) into phosphoenolpyruvate (PEP). It is essential for the degradation of carbohydrates via glycolysis. In Sulfurisphaera tokodaii (strain DSM 16993 / JCM 10545 / NBRC 100140 / 7) (Sulfolobus tokodaii), this protein is Enolase.